A 117-amino-acid polypeptide reads, in one-letter code: Mitochondrial zinc maintenance protein 1, mitochondrial (117 aa).

The N-terminal 10 residues, 1–10, are a transit peptide targeting the mitochondrion; the sequence is MSATLSAYRN. The disordered stretch occupies residues 91–117; it reads NESIKQGKKNLGSLAGKKGSSIRSCKD.

Belongs to the complex I LYR family. MZM1 subfamily. In terms of assembly, interacts with RIP1.

It is found in the mitochondrion matrix. Assembly factor required for Rieske Fe-S protein RIP1 incorporation into the cytochrome b-c1 (CIII) complex. Functions as a chaperone, binding to this subunit within the mitochondrial matrix and stabilizing it prior to its translocation and insertion into the late CIII dimeric intermediate within the mitochondrial inner membrane. Modulates the mitochondrial matrix zinc pool. This is Mitochondrial zinc maintenance protein 1, mitochondrial (MZM1) from Candida tropicalis (strain ATCC MYA-3404 / T1) (Yeast).